Reading from the N-terminus, the 262-residue chain is RNA-binding protein 7 (262 aa).

The residue at position 2 (glycine 2) is an N-acetylglycine. The RRM domain maps to 10–87; that stretch reads RTLFVGNLET…RPIKIQFRAG (78 aa). ZCCHC8 binding regions lie at residues 25–35 and 59–76; these read LLFELFHQAGP and HEVS…IKLF. The tract at residues 95–121 is disordered; the sequence is VSLSYPQHHVGNSSPTSTSPSRTVDNM. Phosphoserine occurs at positions 133 and 134. Arginine 149 is modified (omega-N-methylarginine). Disordered stretches follow at residues 159–212 and 242–262; these read SPHL…HYSR and SHDY…SSRH. Residues 165-194 are compositionally biased toward polar residues; the sequence is SGFSPSAQSHNHTFNQSSSSQWRQDTPSSQ. Position 201 is a phosphoserine (serine 201). The span at 242 to 253 shows a compositional bias: basic and acidic residues; sequence SHDYDNRRDSGR.

As to quaternary structure, component of the nuclear exosome targeting (NEXT) complex composed of MTREX, ZCCHC8, and RBM7 that directs a subset of non-coding short-lived RNAs for exosomal degradation. Interacts with ZCCHC8 and SF3B2/SAP145. Binds to MTREX through ZCCHC8. Interacts with YWHAE and YWHAZ; these interactions are stress-dependent and RBM7 phosphorylation dependent; release RNA from the NEXT complex and may affect RNA targeting to the nuclear RNA exosomome for degradation. Interacts with MEPCE and LARP7, the core subunits of 7SK snRNP; upon genotoxic stress this interaction is enhanced, triggering the release of inactive P-TEFb complex from the core and P-TEFb complex activation. In terms of processing, phosphorylated at Ser-133 by MAPK14/p38-alpha-activated MAPKAPK2/MK2; this phosphorylation is stress-dependent; this phosphorylation decreases its RNA-binding capacity therefore affecting RNA nuclear exosome-mediated degradation. This phosphorylation mediates YWHAE and YWHAZ interactions.

The protein resides in the nucleus. It is found in the nucleoplasm. Its function is as follows. RNA-binding subunit of the trimeric nuclear exosome targeting (NEXT) complex, a complex that functions as an RNA exosome cofactor that directs a subset of non-coding short-lived RNAs for exosomal degradation. NEXT is involved in surveillance and turnover of aberrant transcripts and non-coding RNAs. Binds preferentially polyuridine sequences and associates with newly synthesized RNAs, including pre-mRNAs and short-lived exosome substrates such as promoter upstream transcripts (PROMPTs), enhancer RNAs (eRNAs), and 3'-extended products from small nuclear RNAs (snRNAs). Participates in several biological processes including DNA damage response (DDR) and stress response. During stress response, activation of the p38MAPK-MK2 pathway decreases RBM7-RNA-binding and subsequently the RNA exosome degradation activities, thereby modulating the turnover of non-coding transcriptome. Participates in DNA damage response (DDR), through its interaction with MEPCE and LARP7, the core subunits of 7SK snRNP complex, that release the positive transcription elongation factor b (P-TEFb) complex from the 7SK snRNP. In turn, activation of P-TEFb complex induces the transcription of P-TEFb-dependent DDR genes to promote cell viability. This chain is RNA-binding protein 7, found in Bos taurus (Bovine).